Here is an 895-residue protein sequence, read N- to C-terminus: Procollagen lysyl hydroxylase and glycosyltransferase (895 aa).

The tract at residues M1–H194 is lysyl hydroxylase region. Residues Y537–N895 are glucosyl transferase region. The Fe2OG dioxygenase domain occupies D805–N895. Fe cation-binding residues include H825, D827, and H877. R887 is a catalytic residue.

Requires Fe cation as cofactor. L-ascorbate serves as cofactor.

It catalyses the reaction L-lysyl-[collagen] + 2-oxoglutarate + O2 = (5R)-5-hydroxy-L-lysyl-[collagen] + succinate + CO2. In terms of biological role, displays two enzymatic activities involved in procollagen processing. Forms hydroxylysine residues in -Xaa-Lys-Gly- sequences in collagens. These hydroxylysines are subsequentially glucosylated by a glucosyltransferase activity. Collagen post-translationally modified is detected in mimivirus virion. In Acanthamoeba polyphaga (Amoeba), this protein is Procollagen lysyl hydroxylase and glycosyltransferase.